Consider the following 121-residue polypeptide: UPF0231 protein ESA_03214 (121 aa).

Belongs to the UPF0231 family.

This Cronobacter sakazakii (strain ATCC BAA-894) (Enterobacter sakazakii) protein is UPF0231 protein ESA_03214.